Consider the following 235-residue polypeptide: Phosphatidylserine decarboxylase proenzyme (235 aa).

Serine 204 acts as the Schiff-base intermediate with substrate; via pyruvic acid in catalysis. Serine 204 bears the Pyruvic acid (Ser); by autocatalysis mark.

The protein belongs to the phosphatidylserine decarboxylase family. PSD-A subfamily. Heterodimer of a large membrane-associated beta subunit and a small pyruvoyl-containing alpha subunit. Pyruvate serves as cofactor. Post-translationally, is synthesized initially as an inactive proenzyme. Formation of the active enzyme involves a self-maturation process in which the active site pyruvoyl group is generated from an internal serine residue via an autocatalytic post-translational modification. Two non-identical subunits are generated from the proenzyme in this reaction, and the pyruvate is formed at the N-terminus of the alpha chain, which is derived from the carboxyl end of the proenzyme. The post-translation cleavage follows an unusual pathway, termed non-hydrolytic serinolysis, in which the side chain hydroxyl group of the serine supplies its oxygen atom to form the C-terminus of the beta chain, while the remainder of the serine residue undergoes an oxidative deamination to produce ammonia and the pyruvoyl prosthetic group on the alpha chain.

Its subcellular location is the cell membrane. The enzyme catalyses a 1,2-diacyl-sn-glycero-3-phospho-L-serine + H(+) = a 1,2-diacyl-sn-glycero-3-phosphoethanolamine + CO2. Its pathway is phospholipid metabolism; phosphatidylethanolamine biosynthesis; phosphatidylethanolamine from CDP-diacylglycerol: step 2/2. In terms of biological role, catalyzes the formation of phosphatidylethanolamine (PtdEtn) from phosphatidylserine (PtdSer). In Mycobacterium sp. (strain JLS), this protein is Phosphatidylserine decarboxylase proenzyme.